The following is a 258-amino-acid chain: Tryptophan synthase alpha chain (258 aa).

Residues glutamate 47 and aspartate 58 each act as proton acceptor in the active site.

This sequence belongs to the TrpA family. In terms of assembly, tetramer of two alpha and two beta chains.

The catalysed reaction is (1S,2R)-1-C-(indol-3-yl)glycerol 3-phosphate + L-serine = D-glyceraldehyde 3-phosphate + L-tryptophan + H2O. The protein operates within amino-acid biosynthesis; L-tryptophan biosynthesis; L-tryptophan from chorismate: step 5/5. The alpha subunit is responsible for the aldol cleavage of indoleglycerol phosphate to indole and glyceraldehyde 3-phosphate. The protein is Tryptophan synthase alpha chain of Bacillus thuringiensis subsp. konkukian (strain 97-27).